The sequence spans 586 residues: Protein translocase subunit SecD (586 aa).

6 helical membrane-spanning segments follow: residues 7-27 (LILI…TLKW), 418-438 (SALA…LSGV), 439-459 (VAGF…LSAF), 465-485 (LTSI…NIVI), 521-541 (TFIA…GFAW), and 546-566 (GIVA…EFII).

This sequence belongs to the SecD/SecF family. SecD subfamily. Forms a complex with SecF. Part of the essential Sec protein translocation apparatus which comprises SecA, SecYEG and auxiliary proteins SecDF. Other proteins may also be involved.

Its subcellular location is the cell inner membrane. Part of the Sec protein translocase complex. Interacts with the SecYEG preprotein conducting channel. SecDF uses the proton motive force (PMF) to complete protein translocation after the ATP-dependent function of SecA. This chain is Protein translocase subunit SecD, found in Borreliella burgdorferi (strain ATCC 35210 / DSM 4680 / CIP 102532 / B31) (Borrelia burgdorferi).